A 191-amino-acid chain; its full sequence is Putative resolvase L103 (191 aa).

Residues 11 to 30 (LEVLKVHYQTLYRMEEKGLI) constitute a DNA-binding region (H-T-H motif). A Resolvase/invertase-type recombinase catalytic domain is found at 59–191 (KGICYCRVSS…KKSGKLKAKK (133 aa)). Residues 65–91 (RVSSKKQIKDLNRQVEYMEKNYPEYEI) are a coiled coil. The active-site O-(5'-phospho-DNA)-serine intermediate is the Ser-67.

The protein belongs to the site-specific recombinase resolvase family.

Resolvase catalyzes the resolution (a site-specific recombination) of the cointegrated replicon to yield the final transposition products. The chain is Putative resolvase L103 from Acanthamoeba polyphaga (Amoeba).